The chain runs to 358 residues: Small ribosomal subunit biogenesis GTPase RsgA (358 aa).

The CP-type G domain occupies 76 to 234 (STEIDRPAVA…LADSPGFNQP (159 aa)). GTP is bound by residues 125 to 128 (NKID) and 176 to 184 (GPSGVGKSS). 4 residues coordinate Zn(2+): C259, C264, H266, and C272. A disordered region spans residues 319–358 (TYEPKLANKKYRRPSRRGKNQDQERYENKTLQDIYNDDSE). The segment covering 325–336 (ANKKYRRPSRRG) has biased composition (basic residues). A compositionally biased stretch (basic and acidic residues) spans 337–348 (KNQDQERYENKT).

This sequence belongs to the TRAFAC class YlqF/YawG GTPase family. RsgA subfamily. Monomer. Associates with 30S ribosomal subunit, binds 16S rRNA. The cofactor is Zn(2+).

Its subcellular location is the cytoplasm. In terms of biological role, one of several proteins that assist in the late maturation steps of the functional core of the 30S ribosomal subunit. Helps release RbfA from mature subunits. May play a role in the assembly of ribosomal proteins into the subunit. Circularly permuted GTPase that catalyzes slow GTP hydrolysis, GTPase activity is stimulated by the 30S ribosomal subunit. The polypeptide is Small ribosomal subunit biogenesis GTPase RsgA (Microcystis aeruginosa (strain NIES-843 / IAM M-2473)).